Reading from the N-terminus, the 228-residue chain is uncharacterized protein (228 aa).

The next 5 helical transmembrane spans lie at 14 to 34 (HTIS…MLLV), 42 to 62 (VALF…AITL), 130 to 150 (FIFS…LVGS), 156 to 176 (FSFD…VLFM), and 192 to 212 (IVIA…LIAL).

It belongs to the AzlC family.

The protein localises to the cell membrane. This is an uncharacterized protein from Helicobacter pylori (strain ATCC 700392 / 26695) (Campylobacter pylori).